The primary structure comprises 818 residues: Nibrin (818 aa).

Residues 22-70 (YVVGRKNCEILLTNDQSISRVHAVLTVTEQAVTLKDSSKYGTFVNGEKL) enclose the FHA domain. BRCT domains are found at residues 91-168 (SKFS…SALS) and 211-301 (GKTF…LAAI). 3 disordered regions span residues 372 to 716 (AVGE…DLPR), 729 to 757 (NNSS…KKNV), and 793 to 818 (EEKL…AKKR). Residues 379 to 405 (KTNPTQKASTTNKPLSLGQEPSSTRIV) show a composition bias toward polar residues. Positions 409-419 (VMSSESFSVVE) are enriched in low complexity. Residues 444–469 (APSSGNTTLKHSPQKQTALTSFFQPS) show a composition bias toward polar residues. The Nuclear localization signal motif lies at 470–475 (SKKRPR). The segment covering 515–530 (EETSLGQACGTGQNSS) has biased composition (polar residues). Residues 549 to 571 (TAADDLEMSLEELEFLMSDEMDE) are compositionally biased toward acidic residues. Residues 586-602 (GLTSKINSEQLSNQQEV) are compositionally biased toward polar residues. The segment covering 603–612 (TESKGRKGEK) has biased composition (basic and acidic residues). Over residues 613 to 625 (NQQSSSSNIQSMQ) the composition is skewed to low complexity. 2 stretches are compositionally biased toward polar residues: residues 633–644 (VTNQDTQTQSKR) and 653–662 (SSANKGPSKN). Residues 663–675 (KTPELEEVKKEEV) show a composition bias toward basic and acidic residues. 2 stretches are compositionally biased toward polar residues: residues 678–692 (VVNS…QTSE) and 699–708 (MQASTSNSGP). Residues 793 to 808 (EEKLNEREETLGDDLF) are compositionally biased toward basic and acidic residues. Residues 804-813 (GDDLFRYNPR) carry the FxF/Y motif motif.

This sequence belongs to the Nibrin family. Component of the MRN complex composed of two heterodimers rad50 and mre11 associated with a single nbn.

It is found in the nucleus. The protein resides in the chromosome. The protein localises to the PML body. Its subcellular location is the telomere. Component of the MRN complex, which plays a central role in double-strand break (DSB) repair, DNA recombination, maintenance of telomere integrity and meiosis. The MRN complex is involved in the repair of DNA double-strand breaks (DSBs) via homologous recombination (HR), an error-free mechanism which primarily occurs during S and G2 phases. The complex (1) mediates the end resection of damaged DNA, which generates proper single-stranded DNA, a key initial steps in HR, and is (2) required for the recruitment of other repair factors and efficient activation of ATM and ATR upon DNA damage. The MRN complex possesses single-strand endonuclease activity and double-strand-specific 3'-5' exonuclease activity, which are provided by MRE11, to initiate end resection, which is required for single-strand invasion and recombination. Within the MRN complex, nbn acts as a protein-protein adapter, which specifically recognizes and binds phosphorylated proteins, promoting their recruitment to DNA damage sites. Recruits mre11 and rad50 components of the MRN complex to DSBs in response to DNA damage. Promotes the recruitment of PI3/PI4-kinase family members atm, atr, and probably DNA-PKcs to the DNA damage sites, activating their functions. Mediates the recruitment of phosphorylated rbbp8/CtIP to DSBs, leading to cooperation between the MRN complex and rbbp8/CtIP to initiate end resection. The MRN complex and rbbp8/CtIP are also required for chromosome alignment during metaphase. The polypeptide is Nibrin (nbn) (Danio rerio (Zebrafish)).